Reading from the N-terminus, the 152-residue chain is MWFPQIIAGMAAGGAASAMTPGKVLFTNALGLGCSRSRGLFLEMFGTAVLCLTVLMTAVEKRETNFMAALPIGISLFMAHMALTGYTGTGVNPARSLGAAVAARYFPHYHWIYWISPLLGAFLAWSVWQLLQILDYTTYVNAEKAAGQKKED.

Residues 1–5 lie on the Cytoplasmic side of the membrane; that stretch reads MWFPQ. A helical membrane pass occupies residues 6-26; that stretch reads IIAGMAAGGAASAMTPGKVLF. Residues 27–38 lie on the Extracellular side of the membrane; that stretch reads TNALGLGCSRSR. Residues 39–59 form a helical membrane-spanning segment; the sequence is GLFLEMFGTAVLCLTVLMTAV. Residues 60–65 lie on the Cytoplasmic side of the membrane; the sequence is EKRETN. The helical transmembrane segment at 66–86 threads the bilayer; that stretch reads FMAALPIGISLFMAHMALTGY. At 87-110 the chain is on the extracellular side; the sequence is TGTGVNPARSLGAAVAARYFPHYH. An NPA motif is present at residues 92-94; it reads NPA. The helical transmembrane segment at 111-131 threads the bilayer; sequence WIYWISPLLGAFLAWSVWQLL. The Cytoplasmic segment spans residues 132 to 152; the sequence is QILDYTTYVNAEKAAGQKKED.

It belongs to the MIP/aquaporin (TC 1.A.8) family.

It localises to the membrane. This is an uncharacterized protein from Saccharomyces cerevisiae (strain RM11-1a) (Baker's yeast).